Reading from the N-terminus, the 233-residue chain is Urease accessory protein UreF (233 aa).

Belongs to the UreF family. UreD, UreF and UreG form a complex that acts as a GTP-hydrolysis-dependent molecular chaperone, activating the urease apoprotein by helping to assemble the nickel containing metallocenter of UreC. The UreE protein probably delivers the nickel.

Its subcellular location is the cytoplasm. In terms of biological role, required for maturation of urease via the functional incorporation of the urease nickel metallocenter. The protein is Urease accessory protein UreF of Polaromonas sp. (strain JS666 / ATCC BAA-500).